A 284-amino-acid polypeptide reads, in one-letter code: Bifunctional protein FolD (284 aa).

Residues 165-167 (GAS), isoleucine 190, and isoleucine 231 contribute to the NADP(+) site.

It belongs to the tetrahydrofolate dehydrogenase/cyclohydrolase family. As to quaternary structure, homodimer.

The enzyme catalyses (6R)-5,10-methylene-5,6,7,8-tetrahydrofolate + NADP(+) = (6R)-5,10-methenyltetrahydrofolate + NADPH. It carries out the reaction (6R)-5,10-methenyltetrahydrofolate + H2O = (6R)-10-formyltetrahydrofolate + H(+). It participates in one-carbon metabolism; tetrahydrofolate interconversion. Catalyzes the oxidation of 5,10-methylenetetrahydrofolate to 5,10-methenyltetrahydrofolate and then the hydrolysis of 5,10-methenyltetrahydrofolate to 10-formyltetrahydrofolate. This is Bifunctional protein FolD from Alkaliphilus metalliredigens (strain QYMF).